The primary structure comprises 137 residues: Large ribosomal subunit protein uL16 (137 aa).

The protein belongs to the universal ribosomal protein uL16 family. As to quaternary structure, part of the 50S ribosomal subunit.

Its function is as follows. Binds 23S rRNA and is also seen to make contacts with the A and possibly P site tRNAs. The sequence is that of Large ribosomal subunit protein uL16 from Psychrobacter cryohalolentis (strain ATCC BAA-1226 / DSM 17306 / VKM B-2378 / K5).